The chain runs to 266 residues: tRNA (guanine-N(1)-)-methyltransferase (266 aa).

Residues Gly-113 and 137 to 142 contribute to the S-adenosyl-L-methionine site; that span reads LGDYVL.

Belongs to the RNA methyltransferase TrmD family. In terms of assembly, homodimer.

Its subcellular location is the cytoplasm. It catalyses the reaction guanosine(37) in tRNA + S-adenosyl-L-methionine = N(1)-methylguanosine(37) in tRNA + S-adenosyl-L-homocysteine + H(+). Specifically methylates guanosine-37 in various tRNAs. The sequence is that of tRNA (guanine-N(1)-)-methyltransferase from Paenarthrobacter aurescens (strain TC1).